A 256-amino-acid polypeptide reads, in one-letter code: Pimeloyl-[acyl-carrier protein] methyl ester esterase (256 aa).

Residues 15–242 (HLVLLHGWGL…AAHAPFISHP (228 aa)) form the AB hydrolase-1 domain. Substrate contacts are provided by residues Trp-22, 82 to 83 (SL), and 143 to 147 (FLALQ). Ser-82 serves as the catalytic Nucleophile. Residues Asp-207 and His-235 contribute to the active site. A substrate-binding site is contributed by His-235.

It belongs to the AB hydrolase superfamily. Carboxylesterase BioH family. In terms of assembly, monomer.

It localises to the cytoplasm. The catalysed reaction is 6-carboxyhexanoyl-[ACP] methyl ester + H2O = 6-carboxyhexanoyl-[ACP] + methanol + H(+). Its pathway is cofactor biosynthesis; biotin biosynthesis. Functionally, the physiological role of BioH is to remove the methyl group introduced by BioC when the pimeloyl moiety is complete. It allows to synthesize pimeloyl-ACP via the fatty acid synthetic pathway through the hydrolysis of the ester bonds of pimeloyl-ACP esters. The protein is Pimeloyl-[acyl-carrier protein] methyl ester esterase of Escherichia coli (strain K12 / MC4100 / BW2952).